The sequence spans 292 residues: S-methyl-5'-thioadenosine phosphorylase (292 aa).

Residues Ser11, 53-54 (RH), and 86-87 (SA) contribute to the phosphate site. Met184 is a substrate binding site. Thr185 provides a ligand contact to phosphate. 208-210 (DYD) provides a ligand contact to substrate.

The protein belongs to the PNP/MTAP phosphorylase family. MTAP subfamily. In terms of assembly, homohexamer. Dimer of a homotrimer.

It catalyses the reaction S-methyl-5'-thioadenosine + phosphate = 5-(methylsulfanyl)-alpha-D-ribose 1-phosphate + adenine. The protein operates within amino-acid biosynthesis; L-methionine biosynthesis via salvage pathway; S-methyl-5-thio-alpha-D-ribose 1-phosphate from S-methyl-5'-thioadenosine (phosphorylase route): step 1/1. In terms of biological role, catalyzes the reversible phosphorylation of S-methyl-5'-thioadenosine (MTA) to adenine and 5-methylthioribose-1-phosphate. Involved in the breakdown of MTA, a major by-product of polyamine biosynthesis. Responsible for the first step in the methionine salvage pathway after MTA has been generated from S-adenosylmethionine. Has broad substrate specificity with 6-aminopurine nucleosides as preferred substrates. The sequence is that of S-methyl-5'-thioadenosine phosphorylase from Koribacter versatilis (strain Ellin345).